The following is a 1067-amino-acid chain: Probable importin-5 homolog (1067 aa).

24 HEAT repeats span residues 3-34, 42-75, 93-120, 125-152, 164-197, 206-243, 251-286, 295-347, 349-381, 385-425, 427-466, 468-508, 510-553, 555-596, 598-658, 661-703, 718-757, 763-826, 832-869, 876-909, 917-960, 969-999, 1008-1040, and 1041-1064; these read LQPITDLLKALNSGNTTTIQQAEQLYADYKNH, SFIVLIRTSQDELLRSYPPVLLRTLVNGNDSGNI, FAVREEPKNHIRHSILNVIAILAIQLVP, PEILSFIIESSSSPEENLRESSFYLIGA, APHFDKFALLVEKGLNDPSAKVQVSALETVSTFI, VFKPLIPAMLNTIQKTIESNLEKEAQKGILTFIIIAQY, NFDMIFKVFFQFLEHQSLEDETKHACLHFFLTFAEF, LYLE…HCVS, GLWEFFLQCAPTLLNSGNWKERYTGLMTLSSIS, EKQI…ASYL, REMQDLYKTLIPVSLEHLNDPFPRVTISNCEFLTLFLDEI, PNRV…VDGI, EEFT…GLAV, KKVF…AQCL, EDFI…AMEL, HLFP…SKQH, FTSRLFLDSYERMAASIKTESEPDTLSAKLKALSDLMDIG, ADRI…CIQF, PYIATVLPAMIELIETAPSVEIKTSMICILDDLIENGG, YPHIIKPMMNCTLPNLDPSLIQSAVFGIGLAAEN, FLME…ITNL, PQTIALWLSYLPIQDDGEAGSIIKSLCTLIR, QQYIVKVLEIIAVGLHKKAVNPDDKQIISLALR, and SQESLVAQSLFQLSAENQAILANF.

It belongs to the importin beta family. Importin beta-3 subfamily.

It localises to the cytoplasm. The protein resides in the nucleus. Functionally, functions in nuclear protein import as nuclear transport receptor. Serves as receptor for nuclear localization signals (NLS) in cargo substrates. This chain is Probable importin-5 homolog, found in Dictyostelium discoideum (Social amoeba).